A 1048-amino-acid chain; its full sequence is Malignant fibrous histiocytoma-amplified sequence 1 homolog (1048 aa).

Ala2 bears the N-acetylalanine mark. LRR repeat units lie at residues 60–81, 84–105, 108–129, 132–153, 155–176, 178–199, 201–222, 224–246, 247–268, 270–292, 293–314, 316–337, and 339–360; these read DIEV…LGSA, SLRV…VAEL, HLTE…VVSA, ELRK…LGAL, HLEE…FSCL, HLRT…LLQL, ALEE…ISAL, ALKI…CELA, SLES…FSRL, RLKM…LPLA, GLEE…IAGL, RLLT…IVEL, and GLEE…FGQL. A required for interaction with PJA2 region spans residues 60-360; sequence DIEVLNLGNN…AVLPDNFGQL (301 aa). Positions 60–645 are required for interaction with PPP2R2A; that stretch reads DIEVLNLGNN…DKLLSVAEHR (586 aa). One can recognise a Roc domain in the interval 399–645; that stretch reads QPAVQPRLKL…DKLLSVAEHR (247 aa). Lys597 bears the N6-acetyllysine mark.

In terms of assembly, interacts with RAF1. Interacts with HSPD1. Interacts with PPP2CA; retains PPP2CA into the cytoplasm and excludes it from the nucleus. Interacts with PPP2R2A; the interaction is direct. Interacts with PJA2. Post-translationally, ubiquitinated. Ubiquitination by PJA2 does not lead MFHAS1 to proteasomal degradation but positively regulates its function in polarization of macrophages.

It localises to the cytoplasm. Functionally, probable GTP-binding protein. Functions in innate immunity and more specifically the inflammatory response as a regulator of the Toll-like receptor TLR2 and TLR4 signaling pathways. Negatively regulates the part of the TLR4 signaling pathway that leads to the activation of the transcription factor AP-1. By retaining the phosphatase complex PP2A into the cytoplasm, prevents the dephosphorylation of the AP-1 subunit JUN which is required for proper activation of the transcription factor. Both inhibits and activates the TLR2-dependent signaling pathway. Positively regulates the TLR2 signaling pathway to activate specifically the downstream p38 and JNK MAP kinases and promote the polarization of macrophages toward the pro-inflammatory M1 phenotype. It may also play a role in the regulation of inflammation induced by high glucose through the PKB/AKT signaling pathway. Also involved in erythrocyte differentiation through activation of the ERK1/ERK2 signaling pathway. This Mus musculus (Mouse) protein is Malignant fibrous histiocytoma-amplified sequence 1 homolog.